A 323-amino-acid chain; its full sequence is Olfactory receptor 1E2 (323 aa).

Topologically, residues 1-25 (MMGQNQTSISDFLLLGLPIQPEQQN) are extracellular. N-linked (GlcNAc...) asparagine glycosylation is present at N5. Residues 26–49 (LCYALFLAMYLTTLLGNLLIIVLI) form a helical membrane-spanning segment. Topologically, residues 50–57 (RLDSHLHT) are cytoplasmic. A helical transmembrane segment spans residues 58–79 (PVYLFLSNLSFSDLCFSSVTMP). The Extracellular segment spans residues 80–100 (KLLQNMQNQDPSIPYADCLTQ). An intrachain disulfide couples C97 to C198. Residues 101–120 (MYFFLYFSDLESFLLVAMAY) form a helical membrane-spanning segment. The Cytoplasmic portion of the chain corresponds to 121 to 148 (DRYVAICFPMHYTAICFLLHYTAIMSPM). Residues 149 to 167 (LCLSVVALSWVLTTFHAML) traverse the membrane as a helical segment. Residues 168–205 (HTLLMARLCFCADNVIPHFFCDMSALLKLACSDTRVNE) are Extracellular-facing. The helical transmembrane segment at 206-228 (WVIFIMGGLILVIPFLLILGSYA) threads the bilayer. Residues 229–245 (RIVSSILKVPSSKGICK) are Cytoplasmic-facing. A helical transmembrane segment spans residues 246–269 (AFSTCGSHLSVVSLFYGTVIGLYL). Topologically, residues 270 to 281 (CPSANSSTLKDT) are extracellular. N274 carries an N-linked (GlcNAc...) asparagine glycan. The chain crosses the membrane as a helical span at residues 282 to 301 (VMAMMYTVVTPMLTPFIYSL). Over 302–323 (RNRDMKGALERVICKRKNPFLL) the chain is Cytoplasmic.

It belongs to the G-protein coupled receptor 1 family.

It is found in the cell membrane. Its function is as follows. Odorant receptor. This is Olfactory receptor 1E2 (OR1E2) from Homo sapiens (Human).